The chain runs to 267 residues: Putative carboxymethylenebutenolidase (267 aa).

Active-site residues include Cys137, Asp194, and His226.

Belongs to the dienelactone hydrolase family.

The catalysed reaction is 2-(5-oxo-2,5-dihydrofuran-2-ylidene)acetate + H2O = 4-oxohex-2-enedioate + H(+). The sequence is that of Putative carboxymethylenebutenolidase from Yersinia pestis.